Here is a 423-residue protein sequence, read N- to C-terminus: Galactosylceramide sulfotransferase (423 aa).

The Cytoplasmic segment spans residues 1 to 12 (MTLLPKKPCKSK). Residues 13-35 (AKGLLLGALFTSFLLLLYSYVVP) form a helical; Signal-anchor for type II membrane protein membrane-spanning segment. The Lumenal portion of the chain corresponds to 36–423 (PLYPNMAFTT…WKFLRDFLRW (388 aa)). N-linked (GlcNAc...) asparagine glycosylation is found at Asn66 and Asn312.

Belongs to the galactose-3-O-sulfotransferase family. In terms of tissue distribution, expressed in brain, testis, kidney, stomach, small intestine, liver, and lung. Not detected in heart, skeletal muscle, and spleen.

It is found in the golgi apparatus membrane. The enzyme catalyses a beta-D-galactosyl-(1&lt;-&gt;1')-N-acylsphing-4-enine + 3'-phosphoadenylyl sulfate = an N-acyl-1-beta-D-(3-O-sulfo)-galactosyl-sphing-4-enine + adenosine 3',5'-bisphosphate + H(+). The catalysed reaction is a 1-O-alkyl-2-acyl-3-O-(beta-D-galactosyl)-sn-glycerol + 3'-phosphoadenylyl sulfate = a 1-O-alkyl-2-acyl-3-(beta-D-3-sulfogalactosyl)-sn-glycerol + adenosine 3',5'-bisphosphate + H(+). It carries out the reaction a beta-D-Gal-(1&lt;-&gt;1')-ceramide + 3'-phosphoadenylyl sulfate = 1-(3-O-sulfo-beta-D-galactosyl)-ceramide + adenosine 3',5'-bisphosphate + H(+). It catalyses the reaction a 1,2-diacyl-3-O-(beta-D-galactosyl)-sn-glycerol + 3'-phosphoadenylyl sulfate = 1,2-diacyl-3-(3-O-sulfo-beta-D-galactosyl)-sn-glycerol + adenosine 3',5'-bisphosphate + H(+). The enzyme catalyses a beta-D-Gal-(1-&gt;4)-beta-D-Glc-(1&lt;-&gt;1)-Cer(d18:1(4E)) + 3'-phosphoadenylyl sulfate = beta-D-3-sulfogalactosyl-(1-&gt;4)-beta-D-glucosyl-(1&lt;-&gt;1')-N-acylsphing-4-enine + adenosine 3',5'-bisphosphate + H(+). It functions in the pathway lipid metabolism; sphingolipid metabolism. Functionally, catalyzes the transfer of a sulfate group to position 3 of non-reducing beta-galactosyl residues in glycerolipids and sphingolipids, therefore participates in the biosynthesis of sulfoglycolipids. Catalyzes the synthesis of galactosylceramide sulfate (sulfatide), a major lipid component of the myelin sheath and of monogalactosylalkylacylglycerol sulfate (seminolipid), present in spermatocytes. Seems to prefer beta-glycosides at the non-reducing termini of sugar chains attached to a lipid moiety. Also acts on lactosylceramide, galactosyl 1-alkyl-2-sn-glycerol and galactosyl diacylglycerol (in vitro). This is Galactosylceramide sulfotransferase from Mus musculus (Mouse).